Reading from the N-terminus, the 434-residue chain is Eukaryotic translation initiation factor 3 subunit E (434 aa).

The 174-residue stretch at 219-392 folds into the PCI domain; it reads FFNHPKGRDL…GHVVMGTQPL (174 aa).

This sequence belongs to the eIF-3 subunit E family. In terms of assembly, component of the eukaryotic translation initiation factor 3 (eIF-3) complex. The eIF-3 complex interacts with pix. Interacts with mxt.

Its subcellular location is the cytoplasm. Its function is as follows. Component of the eukaryotic translation initiation factor 3 (eIF-3) complex, which is involved in protein synthesis of a specialized repertoire of mRNAs and, together with other initiation factors, stimulates binding of mRNA and methionyl-tRNAi to the 40S ribosome. The eIF-3 complex specifically targets and initiates translation of a subset of mRNAs involved in cell proliferation. The protein is Eukaryotic translation initiation factor 3 subunit E (eIF3-S6) of Drosophila grimshawi (Hawaiian fruit fly).